Consider the following 266-residue polypeptide: Glucosamine-6-phosphate deaminase (266 aa).

The Proton acceptor; for enolization step role is filled by Asp-72. Asp-141 serves as the catalytic For ring-opening step. His-143 functions as the Proton acceptor; for ring-opening step in the catalytic mechanism. Catalysis depends on Glu-148, which acts as the For ring-opening step.

Belongs to the glucosamine/galactosamine-6-phosphate isomerase family. NagB subfamily. As to quaternary structure, homohexamer.

The enzyme catalyses alpha-D-glucosamine 6-phosphate + H2O = beta-D-fructose 6-phosphate + NH4(+). It participates in amino-sugar metabolism; N-acetylneuraminate degradation; D-fructose 6-phosphate from N-acetylneuraminate: step 5/5. With respect to regulation, allosterically activated by N-acetylglucosamine 6-phosphate (GlcNAc6P). Catalyzes the reversible isomerization-deamination of glucosamine 6-phosphate (GlcN6P) to form fructose 6-phosphate (Fru6P) and ammonium ion. The polypeptide is Glucosamine-6-phosphate deaminase (Yersinia pseudotuberculosis serotype O:1b (strain IP 31758)).